Reading from the N-terminus, the 591-residue chain is Aspartate--tRNA(Asp/Asn) ligase (591 aa).

Residue Glu-174 coordinates L-aspartate. Residues 198–201 form an aspartate region; sequence QLFK. Arg-220 is an L-aspartate binding site. Residues 220-222 and Gln-229 contribute to the ATP site; that span reads RDE. His-450 provides a ligand contact to L-aspartate. Glu-483 contributes to the ATP binding site. L-aspartate is bound at residue Arg-490. Residue 535 to 538 participates in ATP binding; sequence GLDR.

It belongs to the class-II aminoacyl-tRNA synthetase family. Type 1 subfamily. Homodimer.

Its subcellular location is the cytoplasm. The enzyme catalyses tRNA(Asx) + L-aspartate + ATP = L-aspartyl-tRNA(Asx) + AMP + diphosphate. Functionally, aspartyl-tRNA synthetase with relaxed tRNA specificity since it is able to aspartylate not only its cognate tRNA(Asp) but also tRNA(Asn). Reaction proceeds in two steps: L-aspartate is first activated by ATP to form Asp-AMP and then transferred to the acceptor end of tRNA(Asp/Asn). The chain is Aspartate--tRNA(Asp/Asn) ligase from Pseudomonas fluorescens (strain Pf0-1).